The sequence spans 361 residues: MTTTPQPPPQPDETPEGAAGAATAGRDPLEIAADLVDDVSRELDPAELASLERLDQPRRILFVHAHPDDESIGTGATMARYAEAGAGVVLLTATRGELGEVIPPELAHLDPDALAEHRTGELATAMEALGVSDHRFLTRPDGTGYRDSGMVWLEPGRAAAGDDVDPRSLAAADPEEVAARIAEVVREVRPQVVVTYEPGGGYGHPDHVRVHEATVRALVLAAGDGSRGAGGAVPWQVAKVYEIVQPERPVREALRRLAETGAEGAGDPEGPLPSVVVPDGEVTTVVDGTGQVPAKIAALRAHATQVTLDLDAAVPAMRLSNGVPQPVWPQEHYRLVHGVAGGPYDAEGRETDLFAGIAPSS.

Pro residues predominate over residues 1-12 (MTTTPQPPPQPD). The interval 1-27 (MTTTPQPPPQPDETPEGAAGAATAGRD) is disordered. The span at 16–25 (EGAAGAATAG) shows a compositional bias: low complexity. Zn(2+) is bound by residues histidine 66, aspartate 69, and histidine 207.

Belongs to the MshB deacetylase family. The cofactor is Zn(2+).

It catalyses the reaction 1D-myo-inositol 2-acetamido-2-deoxy-alpha-D-glucopyranoside + H2O = 1D-myo-inositol 2-amino-2-deoxy-alpha-D-glucopyranoside + acetate. Catalyzes the deacetylation of 1D-myo-inositol 2-acetamido-2-deoxy-alpha-D-glucopyranoside (GlcNAc-Ins) in the mycothiol biosynthesis pathway. The protein is 1D-myo-inositol 2-acetamido-2-deoxy-alpha-D-glucopyranoside deacetylase of Kineococcus radiotolerans (strain ATCC BAA-149 / DSM 14245 / SRS30216).